A 31-amino-acid polypeptide reads, in one-letter code: Cytochrome b6-f complex subunit 6 (31 aa).

Residues 4 to 26 traverse the membrane as a helical segment; it reads ITSYFGFLLAALTVTSALFIGLS.

Belongs to the PetL family. The 4 large subunits of the cytochrome b6-f complex are cytochrome b6, subunit IV (17 kDa polypeptide, PetD), cytochrome f and the Rieske protein, while the 4 small subunits are PetG, PetL, PetM and PetN. The complex functions as a dimer.

It localises to the plastid. Its subcellular location is the chloroplast thylakoid membrane. Functionally, component of the cytochrome b6-f complex, which mediates electron transfer between photosystem II (PSII) and photosystem I (PSI), cyclic electron flow around PSI, and state transitions. PetL is important for photoautotrophic growth as well as for electron transfer efficiency and stability of the cytochrome b6-f complex. The protein is Cytochrome b6-f complex subunit 6 of Daucus carota (Wild carrot).